The primary structure comprises 465 residues: Chaperone protein dnaJ C76, chloroplastic (465 aa).

A chloroplast-targeting transit peptide spans 1–38; that stretch reads MTPAIFSPTTLPPSTATWPCSTSQKLITVRSPLKFKCR. A J domain is found at 50–113; the sequence is DLYDLLGIDR…ISRQAYDKEQ (64 aa). Residues 346-385 are disordered; it reads AALPSSGNNNGSKASSNPQVTRKTFPSEEKPTSRRENRRQ. Residues 350 to 362 are compositionally biased toward low complexity; the sequence is SSGNNNGSKASSN. Positions 370–384 are enriched in basic and acidic residues; the sequence is FPSEEKPTSRRENRR.

It belongs to the DnaJ family. As to expression, expressed in roots, exclusively in the stele.

Its subcellular location is the plastid. The protein localises to the chloroplast. Functionally, may function together with HSC70 chaperone to assist protein folding and prevent protein aggregation during salt stress in the chloroplast. Involved in root development. Required for the position-dependent cell fate determination during root hair development. This chain is Chaperone protein dnaJ C76, chloroplastic, found in Arabidopsis thaliana (Mouse-ear cress).